Consider the following 1040-residue polypeptide: MQVLPPGSTGGPSRLFILRPVATTLLMAAILLAGIIGYRFLPVAALPEVDYPTIQVVTLYPGASPDVMTSAVTAPLERQFGQMSGLKQMSSQSSGGASVVTLQFQLTLPLDVAEQEVQAAINAATNLLPSDLPNPPIYSKVNPADPPIMTLAVTSNAMPMTQVEDMVETRVAQKISQVSGVGLVTLAGGQRPAVRVKLNAQAVAALGLTSETVRTAITGANVNSAKGSLDGPERAVTLSANDQMQSADDYRRLIIAYQNGAPVRLGDVATVEQGAENSWLGAWANQAPANVMNVQRQPGANIIATADSIRQMLPQLTESLPKSVKVTVLSDRTTNIRASVRDTQFELMLAIALVVMIIYLFLRNIPATIIPGVAVPLSLIGTFAVMVFLDFSINNLTLMALTIATGFVVDDAIVVIENISRYIEKGEKPLAAALKGAGEIGFTIISLTFSLIAVLIPLLFMGDIVGRLFREFAVTLAVAILISAVVSLTLTPMMCARMLSQQSLRKQNRFSRACERMFDRVIASYGRGLAKVLNHPWLTLSVAFATLLLSVMLWIVIPKGFFPVQDNGIIQGTLQAPQSSSYASMAQRQRQVAERILQDPAVQSLTTFVGVDGANPTLNSARLQINLKPLDARDDRVQQVISRLQTAVATIPGVALYLQPTQDLTIDTQVSRTQYQFTLQATTLDALSHWVPKLQNALQSLPQLSEVSSDWQDRGLAAWVNVDRDSASRLGISMADVDNALYNAFGQRLISTIYTQANQYRVVLEHNTASTPGLAALETIRLTSRDGGTVPLSAIARIEQRFAPLSINHLDQFPVTTFSFNVPEGYSLGDAVQAILDTEKTLALPADITTQFQGSTLAFQAALGSTVWLIVAAVVAMYIVLGVLYESFIHPITILSTLPTAGVGALLALIIAGSELDIIAIIGIILLIGIVKKNAIMMIDFALAAEREQGMSPRDAIFQACLLRFRPILMTTLAALLGALPLMLSTGVGAELRRPLGIAMVGGLLVSQVLTLFTTPVIYLLFDRLSLYVKSRFPRHKEEA.

Helical transmembrane passes span 25–45 (LLMA…PVAA), 347–367 (LMLA…NIPA), 369–389 (IIPG…MVFL), 396–416 (LTLM…IVVI), 440–460 (IGFT…PLLF), 472–492 (FAVT…TLTP), 537–557 (WLTL…WIVI), 863–883 (LGST…VLGV), 888–908 (FIHP…ALLA), 910–930 (IIAG…LIGI), 968–988 (ILMT…STGV), and 998–1018 (IAMV…TPVI).

The protein belongs to the resistance-nodulation-cell division (RND) (TC 2.A.6) family. MdtB subfamily. As to quaternary structure, part of a tripartite efflux system composed of MdtA, MdtB and MdtC. MdtB forms a heteromultimer with MdtC.

The protein resides in the cell inner membrane. In Salmonella schwarzengrund (strain CVM19633), this protein is Multidrug resistance protein MdtB.